We begin with the raw amino-acid sequence, 70 residues long: Large ribosomal subunit protein bL31 (70 aa).

Residues C17, C19, C37, and C40 each coordinate Zn(2+).

Belongs to the bacterial ribosomal protein bL31 family. Type A subfamily. As to quaternary structure, part of the 50S ribosomal subunit. Zn(2+) serves as cofactor.

Functionally, binds the 23S rRNA. The polypeptide is Large ribosomal subunit protein bL31 (Clostridium kluyveri (strain NBRC 12016)).